Consider the following 288-residue polypeptide: Ribosomal protein L11 methyltransferase (288 aa).

S-adenosyl-L-methionine contacts are provided by Thr-141, Gly-164, Asp-186, and Asn-227.

The protein belongs to the methyltransferase superfamily. PrmA family.

The protein resides in the cytoplasm. It carries out the reaction L-lysyl-[protein] + 3 S-adenosyl-L-methionine = N(6),N(6),N(6)-trimethyl-L-lysyl-[protein] + 3 S-adenosyl-L-homocysteine + 3 H(+). Functionally, methylates ribosomal protein L11. The polypeptide is Ribosomal protein L11 methyltransferase (Myxococcus xanthus (strain DK1622)).